The primary structure comprises 192 residues: GTP cyclohydrolase-2 (192 aa).

Arginine 47–glutamate 51 provides a ligand contact to GTP. Positions 52, 63, and 65 each coordinate Zn(2+). GTP-binding positions include glutamine 68, glutamate 90–arginine 92, and threonine 112. Catalysis depends on aspartate 124, which acts as the Proton acceptor. Arginine 126 serves as the catalytic Nucleophile. GTP is bound by residues threonine 147 and lysine 152.

This sequence belongs to the GTP cyclohydrolase II family. It depends on Zn(2+) as a cofactor.

It carries out the reaction GTP + 4 H2O = 2,5-diamino-6-hydroxy-4-(5-phosphoribosylamino)-pyrimidine + formate + 2 phosphate + 3 H(+). It functions in the pathway cofactor biosynthesis; riboflavin biosynthesis; 5-amino-6-(D-ribitylamino)uracil from GTP: step 1/4. Catalyzes the conversion of GTP to 2,5-diamino-6-ribosylamino-4(3H)-pyrimidinone 5'-phosphate (DARP), formate and pyrophosphate. The sequence is that of GTP cyclohydrolase-2 from Picrophilus torridus (strain ATCC 700027 / DSM 9790 / JCM 10055 / NBRC 100828 / KAW 2/3).